The sequence spans 245 residues: Type III pantothenate kinase (245 aa).

An ATP-binding site is contributed by 6–13; that stretch reads DQGNTILK. Substrate contacts are provided by residues Y86 and 93-96; that span reads GTDR. D95 serves as the catalytic Proton acceptor. D116 serves as a coordination point for K(+). An ATP-binding site is contributed by T119. T171 is a binding site for substrate.

This sequence belongs to the type III pantothenate kinase family. As to quaternary structure, homodimer. Requires NH4(+) as cofactor. The cofactor is K(+).

The protein resides in the cytoplasm. The catalysed reaction is (R)-pantothenate + ATP = (R)-4'-phosphopantothenate + ADP + H(+). Its pathway is cofactor biosynthesis; coenzyme A biosynthesis; CoA from (R)-pantothenate: step 1/5. Functionally, catalyzes the phosphorylation of pantothenate (Pan), the first step in CoA biosynthesis. In Azobacteroides pseudotrichonymphae genomovar. CFP2, this protein is Type III pantothenate kinase.